The primary structure comprises 45 residues: Photosystem II reaction center protein K (45 aa).

A propeptide spanning residues Met1 to Ala8 is cleaved from the precursor. The chain crosses the membrane as a helical span at residues Leu24–Phe44.

It belongs to the PsbK family. PSII is composed of 1 copy each of membrane proteins PsbA, PsbB, PsbC, PsbD, PsbE, PsbF, PsbH, PsbI, PsbJ, PsbK, PsbL, PsbM, PsbT, PsbX, PsbY, PsbZ, Psb30/Ycf12, peripheral proteins PsbO, CyanoQ (PsbQ), PsbU, PsbV and a large number of cofactors. It forms dimeric complexes.

It is found in the cellular thylakoid membrane. In terms of biological role, one of the components of the core complex of photosystem II (PSII). PSII is a light-driven water:plastoquinone oxidoreductase that uses light energy to abstract electrons from H(2)O, generating O(2) and a proton gradient subsequently used for ATP formation. It consists of a core antenna complex that captures photons, and an electron transfer chain that converts photonic excitation into a charge separation. The chain is Photosystem II reaction center protein K from Synechococcus elongatus (strain ATCC 33912 / PCC 7942 / FACHB-805) (Anacystis nidulans R2).